The sequence spans 505 residues: Histidine ammonia-lyase (505 aa).

Positions 141-143 (ASG) form a cross-link, 5-imidazolinone (Ala-Gly). S142 is subject to 2,3-didehydroalanine (Ser).

The protein belongs to the PAL/histidase family. Contains an active site 4-methylidene-imidazol-5-one (MIO), which is formed autocatalytically by cyclization and dehydration of residues Ala-Ser-Gly.

Its subcellular location is the cytoplasm. It carries out the reaction L-histidine = trans-urocanate + NH4(+). The protein operates within amino-acid degradation; L-histidine degradation into L-glutamate; N-formimidoyl-L-glutamate from L-histidine: step 1/3. The protein is Histidine ammonia-lyase of Bacillus cereus (strain ATCC 10987 / NRS 248).